The primary structure comprises 130 residues: Small ribosomal subunit protein uS9 (130 aa).

Residues 98–130 form a disordered region; sequence LKRAGLLTRDPRMKERKKPGLKKARRSPQFSKR. The segment covering 111–130 has biased composition (basic residues); sequence KERKKPGLKKARRSPQFSKR.

It belongs to the universal ribosomal protein uS9 family.

The polypeptide is Small ribosomal subunit protein uS9 (Staphylococcus haemolyticus (strain JCSC1435)).